The primary structure comprises 160 residues: S-adenosylmethionine decarboxylase proenzyme (160 aa).

Residue Ser73 is the Schiff-base intermediate with substrate; via pyruvic acid of the active site. At Ser73 the chain carries Pyruvic acid (Ser); by autocatalysis. Residue His78 is the Proton acceptor; for processing activity of the active site. Cys93 acts as the Proton donor; for catalytic activity in catalysis.

It belongs to the prokaryotic AdoMetDC family. Type 1 subfamily. As to quaternary structure, heterotetramer of two alpha and two beta chains arranged as a dimer of alpha/beta heterodimers. Pyruvate is required as a cofactor. In terms of processing, is synthesized initially as an inactive proenzyme. Formation of the active enzyme involves a self-maturation process in which the active site pyruvoyl group is generated from an internal serine residue via an autocatalytic post-translational modification. Two non-identical subunits are generated from the proenzyme in this reaction, and the pyruvate is formed at the N-terminus of the alpha chain, which is derived from the carboxyl end of the proenzyme. The post-translation cleavage follows an unusual pathway, termed non-hydrolytic serinolysis, in which the side chain hydroxyl group of the serine supplies its oxygen atom to form the C-terminus of the beta chain, while the remainder of the serine residue undergoes an oxidative deamination to produce ammonia and the pyruvoyl group blocking the N-terminus of the alpha chain.

It carries out the reaction S-adenosyl-L-methionine + H(+) = S-adenosyl 3-(methylsulfanyl)propylamine + CO2. Its pathway is amine and polyamine biosynthesis; S-adenosylmethioninamine biosynthesis; S-adenosylmethioninamine from S-adenosyl-L-methionine: step 1/1. In terms of biological role, catalyzes the decarboxylation of S-adenosylmethionine to S-adenosylmethioninamine (dcAdoMet), the propylamine donor required for the synthesis of the polyamines spermine and spermidine from the diamine putrescine. This is S-adenosylmethionine decarboxylase proenzyme from Pseudomonas paraeruginosa (strain DSM 24068 / PA7) (Pseudomonas aeruginosa (strain PA7)).